The sequence spans 559 residues: Methionine--tRNA ligase (559 aa).

The 'HIGH' region signature appears at 10–20 (PYINAVPHLGT). Zn(2+) is bound by residues C141, C144, C154, and C157. Residues 331–335 (KFSKS) carry the 'KMSKS' region motif. Position 334 (K334) interacts with ATP.

This sequence belongs to the class-I aminoacyl-tRNA synthetase family. MetG type 1 subfamily. Zn(2+) is required as a cofactor.

The protein localises to the cytoplasm. It carries out the reaction tRNA(Met) + L-methionine + ATP = L-methionyl-tRNA(Met) + AMP + diphosphate. In terms of biological role, is required not only for elongation of protein synthesis but also for the initiation of all mRNA translation through initiator tRNA(fMet) aminoacylation. In Korarchaeum cryptofilum (strain OPF8), this protein is Methionine--tRNA ligase.